We begin with the raw amino-acid sequence, 540 residues long: 2-isopropylmalate synthase (540 aa).

The Pyruvate carboxyltransferase domain occupies 8–273; that stretch reads VLIFDTTLRD…FFGRDEDSPT (266 aa). Aspartate 17, histidine 208, histidine 210, and asparagine 244 together coordinate Mn(2+). Positions 408–540 are regulatory domain; sequence QLKLVQVSCG…MAQLDSSPVH (133 aa).

This sequence belongs to the alpha-IPM synthase/homocitrate synthase family. LeuA type 1 subfamily. Homodimer. Mn(2+) is required as a cofactor.

Its subcellular location is the cytoplasm. It carries out the reaction 3-methyl-2-oxobutanoate + acetyl-CoA + H2O = (2S)-2-isopropylmalate + CoA + H(+). The protein operates within amino-acid biosynthesis; L-leucine biosynthesis; L-leucine from 3-methyl-2-oxobutanoate: step 1/4. Its function is as follows. Catalyzes the condensation of the acetyl group of acetyl-CoA with 3-methyl-2-oxobutanoate (2-ketoisovalerate) to form 3-carboxy-3-hydroxy-4-methylpentanoate (2-isopropylmalate). This chain is 2-isopropylmalate synthase, found in Synechococcus sp. (strain CC9311).